Reading from the N-terminus, the 228-residue chain is Thymidylate kinase (228 aa).

Position 20-27 (20-27 (GGEGSGKS)) interacts with ATP.

Belongs to the thymidylate kinase family.

It carries out the reaction dTMP + ATP = dTDP + ADP. Its function is as follows. Phosphorylation of dTMP to form dTDP in both de novo and salvage pathways of dTTP synthesis. The polypeptide is Thymidylate kinase (Afipia carboxidovorans (strain ATCC 49405 / DSM 1227 / KCTC 32145 / OM5) (Oligotropha carboxidovorans)).